We begin with the raw amino-acid sequence, 339 residues long: MQNIYLCLTAFARGTYPDDAAIAGAFDELMSGDAPDAAIGGFLVGLAALGERPSDIAAGARALRSRMTRIEAPVGAIDTCGTGGDGKGAWNISTTAAIIAAGAGATVAKHGNRAASSKSGSSDVLAQLGVKLDCPPAAVERSLAEARVGFLFAPAHHAAVRHVGPARQALKVRTVFNLLGPLSNPAGVKRQLLGVYDRRWLVPIAEALRDLGCEHALVICGQDGMDELTTTTGSDIAELRDGDIREYSFHPEEAGLALVREADLQGGTPADNAAAIRALLDGQQGAFRDIAILNAGAALVLAGLATTIPEGTSLAAAAIDDGRAKAALMRMVAISNGEA.

Residues glycine 81, 84–85, 91–94, 109–117, and serine 121 contribute to the 5-phospho-alpha-D-ribose 1-diphosphate site; these read GD, NIST, and KHGNRAASS. Glycine 81 lines the anthranilate pocket. Serine 93 is a Mg(2+) binding site. An anthranilate-binding site is contributed by asparagine 112. Arginine 167 contributes to the anthranilate binding site. Positions 226 and 227 each coordinate Mg(2+).

This sequence belongs to the anthranilate phosphoribosyltransferase family. Homodimer. Mg(2+) is required as a cofactor.

The enzyme catalyses N-(5-phospho-beta-D-ribosyl)anthranilate + diphosphate = 5-phospho-alpha-D-ribose 1-diphosphate + anthranilate. Its pathway is amino-acid biosynthesis; L-tryptophan biosynthesis; L-tryptophan from chorismate: step 2/5. In terms of biological role, catalyzes the transfer of the phosphoribosyl group of 5-phosphorylribose-1-pyrophosphate (PRPP) to anthranilate to yield N-(5'-phosphoribosyl)-anthranilate (PRA). This is Anthranilate phosphoribosyltransferase from Maricaulis maris (strain MCS10) (Caulobacter maris).